A 104-amino-acid chain; its full sequence is Large ribosomal subunit protein uL24 (104 aa).

The protein belongs to the universal ribosomal protein uL24 family. In terms of assembly, part of the 50S ribosomal subunit.

In terms of biological role, one of two assembly initiator proteins, it binds directly to the 5'-end of the 23S rRNA, where it nucleates assembly of the 50S subunit. Functionally, one of the proteins that surrounds the polypeptide exit tunnel on the outside of the subunit. The polypeptide is Large ribosomal subunit protein uL24 (Pseudomonas fluorescens (strain Pf0-1)).